An 88-amino-acid polypeptide reads, in one-letter code: Phosphocarrier protein HPr (88 aa).

Residues 1–88 (MAEKTFKVVS…DTLAKEGLAE (88 aa)) form the HPr domain. Ser-12 bears the Phosphoserine mark. The Pros-phosphohistidine intermediate role is filled by His-15. At Ser-46 the chain carries Phosphoserine; by HPrK/P.

This sequence belongs to the HPr family.

It is found in the cytoplasm. With respect to regulation, phosphorylation on Ser-46 inhibits the phosphoryl transfer from enzyme I to HPr. General (non sugar-specific) component of the phosphoenolpyruvate-dependent sugar phosphotransferase system (sugar PTS). This major carbohydrate active-transport system catalyzes the phosphorylation of incoming sugar substrates concomitantly with their translocation across the cell membrane. The phosphoryl group from phosphoenolpyruvate (PEP) is transferred to the phosphoryl carrier protein HPr by enzyme I. Phospho-HPr then transfers it to the PTS EIIA domain. Functionally, P-Ser-HPr interacts with the catabolite control protein A (CcpA), forming a complex that binds to DNA at the catabolite response elements cre, operator sites preceding a large number of catabolite-regulated genes. Thus, P-Ser-HPr is a corepressor in carbon catabolite repression (CCR), a mechanism that allows bacteria to coordinate and optimize the utilization of available carbon sources. P-Ser-HPr also plays a role in inducer exclusion, in which it probably interacts with several non-PTS permeases and inhibits their transport activity. The polypeptide is Phosphocarrier protein HPr (ptsH) (Geobacillus stearothermophilus (Bacillus stearothermophilus)).